We begin with the raw amino-acid sequence, 629 residues long: Phosphomethylpyrimidine synthase (629 aa).

Residues 1–21 (MSIKAKNAAHLRESAQVDSGS) are disordered. Residues N233, M262, Y291, H327, 347–349 (SRG), 388–391 (DGLR), and E427 contribute to the substrate site. H431 lines the Zn(2+) pocket. A substrate-binding site is contributed by Y454. Residue H495 coordinates Zn(2+). Positions 575, 578, and 583 each coordinate [4Fe-4S] cluster.

This sequence belongs to the ThiC family. In terms of assembly, homodimer. It depends on [4Fe-4S] cluster as a cofactor.

The enzyme catalyses 5-amino-1-(5-phospho-beta-D-ribosyl)imidazole + S-adenosyl-L-methionine = 4-amino-2-methyl-5-(phosphooxymethyl)pyrimidine + CO + 5'-deoxyadenosine + formate + L-methionine + 3 H(+). It participates in cofactor biosynthesis; thiamine diphosphate biosynthesis. Catalyzes the synthesis of the hydroxymethylpyrimidine phosphate (HMP-P) moiety of thiamine from aminoimidazole ribotide (AIR) in a radical S-adenosyl-L-methionine (SAM)-dependent reaction. The protein is Phosphomethylpyrimidine synthase of Pseudomonas syringae pv. syringae (strain B728a).